The sequence spans 317 residues: Glycine--tRNA ligase alpha subunit (317 aa).

This sequence belongs to the class-II aminoacyl-tRNA synthetase family. In terms of assembly, tetramer of two alpha and two beta subunits.

It is found in the cytoplasm. The catalysed reaction is tRNA(Gly) + glycine + ATP = glycyl-tRNA(Gly) + AMP + diphosphate. This is Glycine--tRNA ligase alpha subunit from Acidovorax ebreus (strain TPSY) (Diaphorobacter sp. (strain TPSY)).